We begin with the raw amino-acid sequence, 550 residues long: Protein UshA (550 aa).

A signal peptide spans 1 to 25 (MRFSLSTTAAALAVSLAFAPGWAVA). A divalent metal cation-binding residues include Asp41, His43, Asp84, Asn116, His217, His252, and Gln254. Cys258 and Cys275 are joined by a disulfide. Residues 375 to 379 (RSKVR) and 498 to 504 (FNALGGD) contribute to the substrate site.

Belongs to the 5'-nucleotidase family. Co(2+) serves as cofactor.

The protein resides in the periplasm. It catalyses the reaction UDP-sugar + H2O = UMP + alpha-D-aldose 1-phosphate.. The enzyme catalyses a ribonucleoside 5'-phosphate + H2O = a ribonucleoside + phosphate. In terms of biological role, degradation of external UDP-glucose to uridine monophosphate and glucose-1-phosphate, which can then be used by the cell. In Yersinia enterocolitica serotype O:8 / biotype 1B (strain NCTC 13174 / 8081), this protein is Protein UshA (ushA).